The following is a 628-amino-acid chain: Choline transporter-like protein 2 (628 aa).

The Cytoplasmic portion of the chain corresponds to 1–31 (MSSEDLQDHHEIGNEVIKKKGVYTKKKCQDC). A helical transmembrane segment spans residues 32–52 (FFLILFLLFWAGMIVVAAFGV). At 53–204 (KNGKPDRIVK…EILTDLTNSW (152 aa)) the chain is on the extracellular side. Residues asparagine 82, asparagine 118, asparagine 146, and asparagine 168 are each glycosylated (N-linked (GlcNAc...) asparagine). A helical membrane pass occupies residues 205–225 (RYLIYGALIAMGLGLTWIFLL). A topological domain (cytoplasmic) is located at residue arginine 226. A helical transmembrane segment spans residues 227–247 (FFAGFITWLTVFAAYACLGLL). Topologically, residues 248 to 282 (TAQVYFQWQDSKDAYENTIPSQRLVMQEKNILALK) are extracellular. A helical membrane pass occupies residues 283-303 (VIFIILCVVCGIFALILLALF). The Cytoplasmic portion of the chain corresponds to 304–319 (SRIRIAIRIIKECSRA). A helical transmembrane segment spans residues 320-340 (IGIMPSIFFFPIFIFLLLCGF). Residues 341-381 (TVYWVYIGVYLATAGSPTYDDQYRFTGYEADSKLQKIQIYH) are Extracellular-facing. The chain crosses the membrane as a helical span at residues 382 to 402 (FFGYLWTFAFILALNQTTIAG). The Cytoplasmic segment spans residues 403–432 (AISSWYWVQDKKDTPFFPVWSSFFRVIRYH). The helical transmembrane segment at 433–453 (LGSIALGSLILAIVQFIRWVL) threads the bilayer. Over 454–530 (RFLEKKFKGK…RVAAVNLVSS (77 aa)) the chain is Extracellular. Residues 531–551 (FLMFLGRVFITAATVGISLYL) traverse the membrane as a helical segment. At 552–559 (LKEHENLS) the chain is on the cytoplasmic side. Residues 560–580 (FYIIPVILIGFIAFAISTGFM) form a helical membrane-spanning segment. The Extracellular segment spans residues 581–628 (SVYDMSIDTMLLCFCEDCERNDGSPERPYYMSKSLRKFVDGKGRSKCC).

It belongs to the CTL (choline transporter-like) family.

The protein resides in the cell membrane. Its subcellular location is the mitochondrion outer membrane. It carries out the reaction choline(out) + n H(+)(in) = choline(in) + n H(+)(out). It catalyses the reaction ethanolamine(out) + n H(+)(in) = ethanolamine(in) + n H(+)(out). Choline/H+ antiporter, mainly in mitochodria. Also acts as a low-affinity ethanolamine/H+ antiporter, regulating the supply of extracellular ethanolamine (Etn) for the CDP-Etn pathway, redistribute intracellular Etn and balance the CDP-Cho and CDP-Etn arms of the Kennedy pathway. The sequence is that of Choline transporter-like protein 2 (slc44a2) from Dictyostelium discoideum (Social amoeba).